The following is a 555-amino-acid chain: Oxygen-dependent choline dehydrogenase (555 aa).

4–33 (DYIIIGAGSAGNVLATRLTEDPDVTVLLLE) contacts FAD. Histidine 473 acts as the Proton acceptor in catalysis.

The protein belongs to the GMC oxidoreductase family. It depends on FAD as a cofactor.

The enzyme catalyses choline + A = betaine aldehyde + AH2. It carries out the reaction betaine aldehyde + NAD(+) + H2O = glycine betaine + NADH + 2 H(+). It functions in the pathway amine and polyamine biosynthesis; betaine biosynthesis via choline pathway; betaine aldehyde from choline (cytochrome c reductase route): step 1/1. In terms of biological role, involved in the biosynthesis of the osmoprotectant glycine betaine. Catalyzes the oxidation of choline to betaine aldehyde and betaine aldehyde to glycine betaine at the same rate. The sequence is that of Oxygen-dependent choline dehydrogenase from Proteus mirabilis (strain HI4320).